The sequence spans 100 residues: Large ribosomal subunit protein uL23 (100 aa).

It belongs to the universal ribosomal protein uL23 family. Part of the 50S ribosomal subunit. Contacts protein L29, and trigger factor when it is bound to the ribosome.

One of the early assembly proteins it binds 23S rRNA. One of the proteins that surrounds the polypeptide exit tunnel on the outside of the ribosome. Forms the main docking site for trigger factor binding to the ribosome. The chain is Large ribosomal subunit protein uL23 from Shewanella frigidimarina (strain NCIMB 400).